Reading from the N-terminus, the 306-residue chain is Non-specific ribonucleoside hydrolase RihC (306 aa).

Histidine 235 is a catalytic residue.

It belongs to the IUNH family. RihC subfamily.

In terms of biological role, hydrolyzes both purine and pyrimidine ribonucleosides with a broad-substrate specificity. This Salmonella paratyphi C (strain RKS4594) protein is Non-specific ribonucleoside hydrolase RihC.